Reading from the N-terminus, the 114-residue chain is Transcription initiation factor IIB (114 aa).

Repeat copies occupy residues 1 to 17 (VEQK…AQEL) and 28 to 109 (QYVP…EQIE).

This sequence belongs to the TFIIB family.

In terms of biological role, stabilizes TBP binding to an archaeal box-A promoter. Also responsible for recruiting RNA polymerase II to the pre-initiation complex (DNA-TBP-TFIIB). The protein is Transcription initiation factor IIB (tfb) of Haloarcula vallismortis (Halobacterium vallismortis).